We begin with the raw amino-acid sequence, 319 residues long: MAMIFCNTLYSSSSPSYLSPLTSKPSRFSKNLRPRAQFQSMEDHDDHLRRKFMEFPYVSPTRKQLMVDLMSTVENRLQSQLLPCNLPPDVRNFNNPNGSAEASLHIRSGDKSSPIDFVIGSWIHCKIPTGVSLNITSISGFLNSSTKAPNFVVELIQSSSKSLVLILDLPHRKDLVLNPDYLKEYYQDTALDSHRQSLLKLPEVNPYVSPSLFVRSAFSPTASMLKIDAEEEDKLEEILRDHVSPAAKEVLEVWLERCVKEEEEKIVVGEEERMELERRDKSFRRKSIEDDLDLQFPRMFGEEVSSRVVHAIKEAFGVL.

The transit peptide at 1 to 39 (MAMIFCNTLYSSSSPSYLSPLTSKPSRFSKNLRPRAQFQ) directs the protein to the chloroplast. Red chlorophyll catabolite contacts are provided by residues Glu-154 and 207-209 (YVS). Residues 255–286 (LERCVKEEEEKIVVGEEERMELERRDKSFRRK) adopt a coiled-coil conformation. Position 291 (Asp-291) interacts with red chlorophyll catabolite.

Homodimer. Interacts with HCAR. Interacts with SGR1, NYC1, NOL, PPH, PAO and the LHCII complex. Part of a SGR1-CCE-LHCII complex, which acts in chlorophyll breakdown. As to expression, expressed in all tissues tested, including roots.

The protein localises to the plastid. It localises to the chloroplast stroma. The protein resides in the chloroplast thylakoid membrane. The enzyme catalyses primary fluorescent chlorophyll catabolite + 2 oxidized [2Fe-2S]-[ferredoxin] = red chlorophyll catabolite + 2 reduced [2Fe-2S]-[ferredoxin] + 3 H(+). It participates in porphyrin-containing compound metabolism; chlorophyll degradation. Its function is as follows. Catalyzes the key reaction of chlorophyll catabolism, porphyrin macrocycle cleavage of pheophorbide a (pheide a) to a primary fluorescent catabolite (pFCC). Works in a two-step reaction with pheophorbide a oxygenase (PaO) by reducing the C20/C1 double bond of the intermediate, RCC. Belongs to the chlorophyll catabolic enzymes (CCEs). The chain is Red chlorophyll catabolite reductase, chloroplastic from Arabidopsis thaliana (Mouse-ear cress).